Reading from the N-terminus, the 157-residue chain is Peptide methionine sulfoxide reductase MsrB (157 aa).

Positions 14-137 (DNDLRERLTP…NSAALRFVPL (124 aa)) constitute a MsrB domain. Cys-126 acts as the Nucleophile in catalysis.

The protein belongs to the MsrB Met sulfoxide reductase family.

It catalyses the reaction L-methionyl-[protein] + [thioredoxin]-disulfide + H2O = L-methionyl-(R)-S-oxide-[protein] + [thioredoxin]-dithiol. The sequence is that of Peptide methionine sulfoxide reductase MsrB from Deinococcus radiodurans (strain ATCC 13939 / DSM 20539 / JCM 16871 / CCUG 27074 / LMG 4051 / NBRC 15346 / NCIMB 9279 / VKM B-1422 / R1).